The primary structure comprises 311 residues: MANPLYQKHIISINDLSRDDLNLVLATAAKLKAHPQPELLKHKVIASCFFEASTRTRLSFETSMHRLGASVVGFSDSANTSLGKKGETLADTISVISTYVDAIVMRHPQEGAARLATEFSGKVPVLNAGDGSNQHPTQTLLDLFTIQETQGRLDNLHIAMVGDLKYGRTVHSLTQALAKFSGNRFYFIAPEALAMPQYILDMLDEKGMDWSLHGSIEEVMAEVDILYMTRVQKERLDPSEYANVKAQFVLRASDLNGARENMKVLHPLPRIDEITTDVDKTPHAWYFQQAGNGIFARQALLALVLNSELSL.

Carbamoyl phosphate-binding residues include R55 and T56. K85 lines the L-aspartate pocket. Carbamoyl phosphate is bound by residues R106, H135, and Q138. L-aspartate is bound by residues R168 and R230. Carbamoyl phosphate is bound by residues L268 and P269.

The protein belongs to the aspartate/ornithine carbamoyltransferase superfamily. ATCase family. As to quaternary structure, heterododecamer (2C3:3R2) of six catalytic PyrB chains organized as two trimers (C3), and six regulatory PyrI chains organized as three dimers (R2).

It carries out the reaction carbamoyl phosphate + L-aspartate = N-carbamoyl-L-aspartate + phosphate + H(+). It participates in pyrimidine metabolism; UMP biosynthesis via de novo pathway; (S)-dihydroorotate from bicarbonate: step 2/3. Its function is as follows. Catalyzes the condensation of carbamoyl phosphate and aspartate to form carbamoyl aspartate and inorganic phosphate, the committed step in the de novo pyrimidine nucleotide biosynthesis pathway. The protein is Aspartate carbamoyltransferase catalytic subunit of Salmonella arizonae (strain ATCC BAA-731 / CDC346-86 / RSK2980).